Here is a 216-residue protein sequence, read N- to C-terminus: Ras-related protein Rab11C (216 aa).

19-26 lines the GTP pocket; it reads GDSGVGKS. The Effector region motif lies at 41–49; the sequence is SKSTIGVEF. GTP contacts are provided by residues 67–71 and 125–128; these read DTAGQ and NKSD. 2 S-geranylgeranyl cysteine lipidation sites follow: Cys-213 and Cys-214.

The protein belongs to the small GTPase superfamily. Rab family.

Its subcellular location is the cell membrane. The protein is Ras-related protein Rab11C (RAB11C) of Lotus japonicus (Lotus corniculatus var. japonicus).